The primary structure comprises 490 residues: Hippocampus abundant transcript 1 protein (490 aa).

M1 bears the N-acetylmethionine mark. Over 1-40 (MTQGKKKKRAANRSIMLAKKIIIKDGGTPQGIGSPSVYHA) the chain is Extracellular. A glycan (N-linked (GlcNAc...) asparagine) is linked at N12. A helical transmembrane segment spans residues 41–61 (VIVIFLEFFAWGLLTAPTLVV). Residues 62 to 74 (LHETFPKHTFLMN) are Cytoplasmic-facing. A helical membrane pass occupies residues 75–95 (GLIQGVKGLLSFLSAPLIGAL). Residues 96–103 (SDVWGRKS) are Extracellular-facing. A helical transmembrane segment spans residues 104–124 (FLLLTVFFTCAPIPLMKISPW). The Cytoplasmic segment spans residues 125–126 (WY). Residues 127-147 (FAVISVSGVFAVTFSVVFAYV) form a helical membrane-spanning segment. Over 148 to 160 (ADITQEHERSMAY) the chain is Extracellular. A helical membrane pass occupies residues 161 to 181 (GLVSATFAASLVTSPAIGAYL). Residues 182–188 (GRVYGDS) are Cytoplasmic-facing. A helical membrane pass occupies residues 189-209 (LVVVLATAIALLDICFILVAV). Residues 210-243 (PESLPEKMRPASWGAPISWEQADPFASLKKVGQD) are Extracellular-facing. A helical membrane pass occupies residues 244 to 264 (SIVLLICITVFLSYLPEAGQY). At 265 to 284 (SSFFLYLRQIMKFSPESVAA) the chain is on the cytoplasmic side. A helical membrane pass occupies residues 285-305 (FIAVLGILSIIAQTIVLSLLM). At 306-313 (RSIGNKNT) the chain is on the extracellular side. Residues 314-334 (ILLGLGFQILQLAWYGFGSEP) form a helical membrane-spanning segment. Residues 335 to 337 (WMM) are Cytoplasmic-facing. The chain crosses the membrane as a helical span at residues 338–358 (WAAGAVAAMSSITFPAVSALV). Residues 359–379 (SRTADADQQGVVQGMITGIRG) lie on the Extracellular side of the membrane. The helical transmembrane segment at 380 to 400 (LCNGLGPALYGFIFYIFHVEL) threads the bilayer. Residues 401-427 (KELPITGTDLGTNTSPQHHFEQNSIIP) lie on the Cytoplasmic side of the membrane. Residues 428–448 (GPPFLFGACSVLLALLVALFI) traverse the membrane as a helical segment. The Extracellular portion of the chain corresponds to 449 to 490 (PEHTNLSLRSSSWRKHCGSHSHPHSTQAPGEAKEPLLQDTNV). A glycan (N-linked (GlcNAc...) asparagine) is linked at N453. Residues 466 to 490 (GSHSHPHSTQAPGEAKEPLLQDTNV) form a disordered region.

Belongs to the major facilitator superfamily. In terms of tissue distribution, expressed in various tissues.

It is found in the membrane. This Mus musculus (Mouse) protein is Hippocampus abundant transcript 1 protein.